The following is a 123-amino-acid chain: Small ribosomal subunit protein uS12 (123 aa).

Residue D89 is modified to 3-methylthioaspartic acid.

It belongs to the universal ribosomal protein uS12 family. Part of the 30S ribosomal subunit. Contacts proteins S8 and S17. May interact with IF1 in the 30S initiation complex.

Its function is as follows. With S4 and S5 plays an important role in translational accuracy. In terms of biological role, interacts with and stabilizes bases of the 16S rRNA that are involved in tRNA selection in the A site and with the mRNA backbone. Located at the interface of the 30S and 50S subunits, it traverses the body of the 30S subunit contacting proteins on the other side and probably holding the rRNA structure together. The combined cluster of proteins S8, S12 and S17 appears to hold together the shoulder and platform of the 30S subunit. The protein is Small ribosomal subunit protein uS12 of Rhizobium leguminosarum bv. trifolii (strain WSM2304).